The chain runs to 346 residues: Free fatty acid receptor 3 (346 aa).

At 1–19 the chain is on the extracellular side; that stretch reads MDTGPDQSYFSGNHWFVFS. The chain crosses the membrane as a helical span at residues 20 to 40; the sequence is VYLLTFLVGLPLNLLALVVFV. The Cytoplasmic portion of the chain corresponds to 41 to 47; that stretch reads GKLQRRP. The chain crosses the membrane as a helical span at residues 48 to 68; sequence VAVDVLLLNLTASDLLLLLFL. Topologically, residues 69 to 88 are extracellular; sequence PFRMVEAANGMHWPLPFILC. An intrachain disulfide couples C88 to C169. A helical transmembrane segment spans residues 89 to 111; sequence PLSGFIFFTTIYLTALFLAAVSI. The Cytoplasmic segment spans residues 112-132; that stretch reads ERFLSVAHPLWYKTRPRLGQA. Residues 133-153 traverse the membrane as a helical segment; it reads GLVSVACWLLASAHCSVVYVI. The Extracellular segment spans residues 154–178; sequence EFSGDISHSQGTNGTCYLEFRKDQL. A glycan (N-linked (GlcNAc...) asparagine) is linked at N166. Residues 179-199 form a helical membrane-spanning segment; the sequence is AILLPVRLEMAVVLFVVPLII. At 200–222 the chain is on the cytoplasmic side; sequence TSYCYSRLVWILGRGGSHRRQRR. Residues 223 to 243 form a helical membrane-spanning segment; the sequence is VAGLLAATLLNFLVCFGPYNV. Over 244–258 the chain is Extracellular; it reads SHVVGYICGESPAWR. The helical transmembrane segment at 259–279 threads the bilayer; the sequence is IYVTLLSTLNSCVDPFVYYFS. The Cytoplasmic segment spans residues 280–346; the sequence is SSGFQADFHE…TGGQVACAES (67 aa). Residues 307-330 show a composition bias toward basic and acidic residues; the sequence is MELKEQKGGEEQRADRPAERKTSE. The segment at 307–346 is disordered; the sequence is MELKEQKGGEEQRADRPAERKTSEHSQGCGTGGQVACAES.

Belongs to the G-protein coupled receptor 1 family. As to expression, highest level in adipose tissue, and lower expression across all tissues tested. Expressed in sympathetic ganglia.

Its subcellular location is the cell membrane. Its function is as follows. G protein-coupled receptor that is activated by a major product of dietary fiber digestion, the short chain fatty acids (SCFAs), and that plays a role in the regulation of whole-body energy homeostasis and in intestinal immunity. In omnivorous mammals, the short chain fatty acids acetate, propionate and butyrate are produced primarily by the gut microbiome that metabolizes dietary fibers. SCFAs serve as a source of energy but also act as signaling molecules. That G protein-coupled receptor is probably coupled to the pertussis toxin-sensitive, G(i/o)-alpha family of G proteins. Its activation results in the formation of inositol 1,4,5-trisphosphate, the mobilization of intracellular calcium, the phosphorylation of the MAPK3/ERK1 and MAPK1/ERK2 kinases and the inhibition of intracellular cAMP accumulation. Activated by SCFAs and by beta-hydroxybutyrate, a ketone body produced by the liver upon starvation, it inhibits N-type calcium channels and modulates the activity of sympathetic neurons through a signaling cascade involving the beta and gamma subunits of its coupled G protein, phospholipase C and MAP kinases. Thereby, it may regulate energy expenditure through the control of the sympathetic nervous system that controls for instance heart rate. Upon activation by SCFAs accumulating in the intestine, it may also signal to the brain via neural circuits which in turn would regulate intestinal gluconeogenesis. May also control the production of hormones involved in whole-body energy homeostasis. May for instance, regulate blood pressure through renin secretion. May also regulate secretion of the PYY peptide by enteroendocrine cells and control gut motility, intestinal transit rate, and the harvesting of energy from SCFAs produced by gut microbiota. May also indirectly regulate the production of LEP/Leptin, a hormone acting on the CNS to inhibit food intake, in response to the presence of short-chain fatty acids in the intestine. Finally, may also play a role in glucose homeostasis. Besides its role in energy homeostasis, may play a role in intestinal immunity. May mediate the activation of the inflammatory and immune response by SCFAs in the gut, regulating the rapid production of chemokines and cytokines by intestinal epithelial cells. Among SCFAs, the fatty acids containing less than 6 carbons, the most potent activators are probably propionate, butyrate and pentanoate while acetate is a poor activator. This is Free fatty acid receptor 3 (FFAR3) from Homo sapiens (Human).